Here is a 361-residue protein sequence, read N- to C-terminus: uncharacterized protein (361 aa).

WD repeat units follow at residues 57-96 (RHKKSCRNISVNESGTEFISVGSDGVLKIADTSTGRVSSK), 103-142 (KEISPYSVVQWIENDMVFATGDDNGCVSVWDKRTEGGIIH), 146-184 (DHIDYISSISPFEERYFVATSGDGVLSVIDARNFKKPIL), 187-229 (EQDE…DHTD), 237-275 (SHDFSIETITRADSDSLYVGGSDGCIRLLHILPNKYERI), and 280-318 (SSRSTVDAVDVTTEGNFLVSCSGTELAFWPVDQKEGDES). Positions 311–361 (DQKEGDESSSSDNLDSDEDSSSDSEFSSPKKKKKVGNQGKKPLGTDFFDGL) are disordered.

The protein localises to the nucleus. Its subcellular location is the nucleolus. This is an uncharacterized protein from Schizosaccharomyces pombe (strain 972 / ATCC 24843) (Fission yeast).